Reading from the N-terminus, the 103-residue chain is Large ribosomal subunit protein bL21 (103 aa).

This sequence belongs to the bacterial ribosomal protein bL21 family. As to quaternary structure, part of the 50S ribosomal subunit. Contacts protein L20.

Functionally, this protein binds to 23S rRNA in the presence of protein L20. The sequence is that of Large ribosomal subunit protein bL21 from Pectobacterium atrosepticum (strain SCRI 1043 / ATCC BAA-672) (Erwinia carotovora subsp. atroseptica).